Here is a 369-residue protein sequence, read N- to C-terminus: MKVIISGGGTAGHINPGLAIAKYIKKREPDTEILFIGTERGLEARLVPRENFEIKMIKVRGFKRKLSMDTLVAVKELFQGLAEARKIIKDYKPDLVIGTGGYVCGPVLFNASRMKIPTLVHEQNAFPGVTNKILSKFVDRVAISFKEAEKYFKDKSKVVFTGNPIRSEMLEVSRETARKKLGIPKDMPLVVIFGGSRGAENINSTVAELIKRHKSDLGFYLIYATGEAQYDGIMKKIGEVKSPNINILPYIFDMANAMAAADLVVCRAGAITVSELTALGVPSILIPSPYVTANHQEHNARALERQGASVVILEKNLRPDILYEEITTLLKDRNKLSQMAKNAKSIGITNATERIYEIIKDIMKNKAAG.

UDP-N-acetyl-alpha-D-glucosamine contacts are provided by residues 10 to 12 (TAG), asparagine 124, arginine 166, serine 196, isoleucine 251, and glutamine 296.

This sequence belongs to the glycosyltransferase 28 family. MurG subfamily.

It localises to the cell membrane. It carries out the reaction di-trans,octa-cis-undecaprenyl diphospho-N-acetyl-alpha-D-muramoyl-L-alanyl-D-glutamyl-meso-2,6-diaminopimeloyl-D-alanyl-D-alanine + UDP-N-acetyl-alpha-D-glucosamine = di-trans,octa-cis-undecaprenyl diphospho-[N-acetyl-alpha-D-glucosaminyl-(1-&gt;4)]-N-acetyl-alpha-D-muramoyl-L-alanyl-D-glutamyl-meso-2,6-diaminopimeloyl-D-alanyl-D-alanine + UDP + H(+). Its pathway is cell wall biogenesis; peptidoglycan biosynthesis. Cell wall formation. Catalyzes the transfer of a GlcNAc subunit on undecaprenyl-pyrophosphoryl-MurNAc-pentapeptide (lipid intermediate I) to form undecaprenyl-pyrophosphoryl-MurNAc-(pentapeptide)GlcNAc (lipid intermediate II). In Acetivibrio thermocellus (strain ATCC 27405 / DSM 1237 / JCM 9322 / NBRC 103400 / NCIMB 10682 / NRRL B-4536 / VPI 7372) (Clostridium thermocellum), this protein is UDP-N-acetylglucosamine--N-acetylmuramyl-(pentapeptide) pyrophosphoryl-undecaprenol N-acetylglucosamine transferase.